A 474-amino-acid chain; its full sequence is Crocetin glucosyltransferase, chloroplastic (474 aa).

The transit peptide at 1–45 (MVQQRHVLLITYPAQGHINPALQFAQRLLRMGIQVTLATSVYALS) directs the protein to the chloroplast. His-17 acts as the Proton acceptor in catalysis. His-17 is an an anthocyanidin binding site. 8 residues coordinate UDP-alpha-D-glucose: Gln-346, His-361, Trp-364, Asn-365, Ser-366, Glu-369, Asp-385, and Gln-386.

Belongs to the UDP-glycosyltransferase family. As to expression, ubiquitous.

It is found in the plastid. Its subcellular location is the chloroplast. The catalysed reaction is crocetin + UDP-alpha-D-glucose = beta-D-glucosyl crocetin + UDP. It carries out the reaction beta-D-glucosyl crocetin + UDP-alpha-D-glucose = bis(beta-D-glucosyl) crocetin + UDP. The enzyme catalyses beta-D-gentiobiosyl crocetin + UDP-alpha-D-glucose = beta-D-gentiobiosyl beta-D-glucosyl crocetin + UDP. In terms of biological role, glucosyltransferase acting on a broad range of substrates, including crocetin, 4-coumaric acid, caffeic acid and ferulic acid. No activity with indol-3-acetic acid, bixin and norbixin, and no formation of O-glucosides. Involved with UGT94E5 in sequential glycosylation of crocetin to crocin (bis(beta-D-gentiobiosyl) crocetin). In Gardenia jasminoides (Cape jasmine), this protein is Crocetin glucosyltransferase, chloroplastic (UGT75L6).